The following is a 174-amino-acid chain: Sarcoplasmic calcium-binding protein (174 aa).

An N-acetylserine modification is found at S1. 4 EF-hand domains span residues 3-38 (LWVQKMKTYFNRIDFDKDGAITRKDFESMATRFAKE), 55-90 (GVWDKFLANVAGGKGIDQATFISSMKEKVKDPNAKA), 91-126 (VVEGPLPLFFRAVDTNEDNMISRDEYGIFFNMLGLN), and 125-160 (LNPDMAPASFDAIDTNNDGLLSQEEFVTAGSDFFIN). Ca(2+) contacts are provided by D16, D18, D20, and D27. Residues D104, N106, D108, M110, E115, D138, N140, D142, and E149 each contribute to the Ca(2+) site.

Functionally, like parvalbumins, SCPs seem to be more abundant in fast contracting muscles, but no functional relationship can be established from this distribution. The protein is Sarcoplasmic calcium-binding protein of Perinereis vancaurica tetradentata (Sandworm).